Reading from the N-terminus, the 104-residue chain is Chitin-binding protein 2 (104 aa).

Oligomer in an unreduced state. Glycosylated.

Chitin-binding protein. Has antifungal activity against C.krusei, C.albicans, C.tropicalis and C.parapsilosis. Inhibits C.albicans by increasing cell membrane permeability and production of reactive oxygen species. Has no hemagglutinating activity. This Moringa oleifera (Horseradish tree) protein is Chitin-binding protein 2.